The following is a 112-amino-acid chain: MAM and fibronectin type III domain-containing protein 2 (112 aa).

Component of the acid-insoluble and acid-soluble organic matrix of the aragonitic skeleton (at protein level).

The protein resides in the secreted. The polypeptide is MAM and fibronectin type III domain-containing protein 2 (Acropora millepora (Staghorn coral)).